Consider the following 572-residue polypeptide: Na(+)/citrate cotransporter (572 aa).

8 consecutive transmembrane segments (helical) span residues 13–33 (SFVI…LVPD), 53–73 (VIPV…LKVL), 80–100 (VQYM…ATAV), 124–144 (LMLG…NTAT), 218–238 (AASI…VLLG), 255–275 (SWFA…WLWL), 315–335 (PLSY…ILWF), and 357–377 (HVTD…VPSQ). The N-linked (GlcNAc...) asparagine glycan is linked to Asn382. 4 helical membrane-spanning segments follow: residues 410–430 (VPWG…GCET), 443–463 (PLSS…VAMT), 491–511 (PLYV…LPVA), and 532–552 (TGLV…NTWG). Residue Asn566 is glycosylated (N-linked (GlcNAc...) asparagine).

It belongs to the SLC13A/DASS transporter (TC 2.A.47) family. NADC subfamily. As to quaternary structure, homodimer. In terms of tissue distribution, expressed in liver, testis and brain.

It is found in the cell membrane. The enzyme catalyses citrate(out) + 4 Na(+)(out) = citrate(in) + 4 Na(+)(in). Inhibited by Li(+). Functionally, high-affinity sodium/citrate cotransporter that mediates citrate entry into cells, which is a critical participant of biochemical pathways. May function in various metabolic processes in which citrate has a critical role such as energy production (Krebs cycle), fatty acid synthesis, cholesterol synthesis, glycolysis, and gluconeogenesis. Transports citrate into the cell in a Na(+)-dependent manner, recognizing the trivalent form of citrate (physiological pH) rather than the divalent form. Can recognize succinate as a substrate, but its affinity for succinate is several fold lower than for citrate. The stoichiometry is probably 4 Na(+) for each carboxylate, irrespective of whether the translocated substrate is divalent or trivalent, rendering the process electrogenic. Involved in the regulation of citrate levels in the brain. In Rattus norvegicus (Rat), this protein is Na(+)/citrate cotransporter (Slc13a5).